The following is an 81-amino-acid chain: Protein Vpu (81 aa).

Residues 1-6 (MQPIQI) lie on the Extracellular side of the membrane. Residues 7–27 (AIVALVVAIIIAIVVWSIVII) form a helical membrane-spanning segment. Over 28-81 (EYRKILRQRKIDRLIDRLIERAEDSGNESEGEISALVEMGVEMGHHAPWDVDDL) the chain is Cytoplasmic. Residues S52 and S56 each carry the phosphoserine; by host CK2 modification.

It belongs to the HIV-1 VPU protein family. As to quaternary structure, homopentamer. Interacts with host CD4 and BRTC; these interactions induce proteasomal degradation of CD4. Interacts with host BST2; this interaction leads to the degradation of host BST2. Interacts with host FBXW11. Interacts with host AP1M1; this interaction plays a role in the mistrafficking and subsequent degradation of host BST2. Interacts with host RANBP2; this interaction allows Vpu to down-regulate host BLM sumoylation. Post-translationally, phosphorylated by host CK2. This phosphorylation is necessary for interaction with human BTRC and degradation of CD4.

The protein resides in the host membrane. Ion channel activity is inhibited by hexamethylene amiloride in vitro. Functionally, enhances virion budding by targeting host CD4 and Tetherin/BST2 to proteasome degradation. Degradation of CD4 prevents any unwanted premature interactions between viral Env and its host receptor CD4 in the endoplasmic reticulum. Degradation of antiretroviral protein Tetherin/BST2 is important for virion budding, as BST2 tethers new viral particles to the host cell membrane. Mechanistically, Vpu bridges either CD4 or BST2 to BTRC, a substrate recognition subunit of the Skp1/Cullin/F-box protein E3 ubiquitin ligase, induces their ubiquitination and subsequent proteasomal degradation. The alteration of the E3 ligase specificity by Vpu seems to promote the degradation of host IKBKB, leading to NF-kappa-B down-regulation and subsequent apoptosis. Acts as a viroporin that forms an oligomeric ion channel in membranes. Modulates the host DNA repair mechanisms to promote degradation of nuclear viral cDNA in cells that are already productively infected in order to suppress immune sensing and proviral hyper-integration (superinfection). Manipulates PML-NBs and modulates SUMOylation of host BLM protein thereby enhancing its DNA-end processing activity toward viral unintegrated linear DNA. Also inhibits RAD52-mediated homologous repair of viral cDNA, preventing the generation of dead-end circular forms of single copies of the long terminal repeat and permitting sustained nucleolytic attack. The chain is Protein Vpu from Human immunodeficiency virus type 1 group M subtype B (isolate BH10) (HIV-1).